A 282-amino-acid chain; its full sequence is Urease accessory protein UreD (282 aa).

The protein belongs to the UreD family. UreD, UreF and UreG form a complex that acts as a GTP-hydrolysis-dependent molecular chaperone, activating the urease apoprotein by helping to assemble the nickel containing metallocenter of UreC. The UreE protein probably delivers the nickel.

It is found in the cytoplasm. Its function is as follows. Required for maturation of urease via the functional incorporation of the urease nickel metallocenter. In Methylobacterium sp. (strain 4-46), this protein is Urease accessory protein UreD.